The chain runs to 881 residues: Alanine--tRNA ligase (881 aa).

Positions 568, 572, 670, and 674 each coordinate Zn(2+).

Belongs to the class-II aminoacyl-tRNA synthetase family. Requires Zn(2+) as cofactor.

It localises to the cytoplasm. It carries out the reaction tRNA(Ala) + L-alanine + ATP = L-alanyl-tRNA(Ala) + AMP + diphosphate. In terms of biological role, catalyzes the attachment of alanine to tRNA(Ala) in a two-step reaction: alanine is first activated by ATP to form Ala-AMP and then transferred to the acceptor end of tRNA(Ala). Also edits incorrectly charged Ser-tRNA(Ala) and Gly-tRNA(Ala) via its editing domain. This chain is Alanine--tRNA ligase, found in Clostridium acetobutylicum (strain ATCC 824 / DSM 792 / JCM 1419 / IAM 19013 / LMG 5710 / NBRC 13948 / NRRL B-527 / VKM B-1787 / 2291 / W).